We begin with the raw amino-acid sequence, 135 residues long: uncharacterized protein (135 aa).

An HTH hxlR-type domain is found at 25-123 (CPIQHVVDLL…LGSDWLEQES (99 aa)).

This is an uncharacterized protein from Synechocystis sp. (strain ATCC 27184 / PCC 6803 / Kazusa).